We begin with the raw amino-acid sequence, 829 residues long: Potassium voltage-gated channel unc-103 (829 aa).

The interval 1-76 (MKTAVFGRDS…PRASHSSRRT (76 aa)) is disordered. Topologically, residues 1–123 (MKTAVFGRDS…YSPFKAVWDW (123 aa)) are cytoplasmic. Over residues 46 to 66 (GVSGTGGGGSGGLQGAPGAGG) the composition is skewed to gly residues. Residues 124–144 (IILLLVIYTAVFTPYVAAFLL) traverse the membrane as a helical segment. The Extracellular portion of the chain corresponds to 145–158 (RELQDTAKKSRFTE). A helical transmembrane segment spans residues 159–179 (PLEIVDLIVDIMFIVDIIINF). Residues 180-203 (RTTYVNENDEACQVVSDPGKIATH) are Cytoplasmic-facing. The helical transmembrane segment at 204–224 (YFKGWFIIDMVAAVPFDLLLV) threads the bilayer. Over 225-234 (STNSDETTTL) the chain is Extracellular. Residues 235-255 (IGLLKTARLLRLVRVARKLDR) form a helical; Voltage-sensor membrane-spanning segment. Residues 256–261 (YSEYGA) are Cytoplasmic-facing. The chain crosses the membrane as a helical span at residues 262-282 (AVLLLLMATFALIAHWLACIW). Residues 283–327 (YAIGSAELSHKEYTWLHQLSKQLAQPYTSTNGTIPTGGPTLKSRY) are Extracellular-facing. Asn-313 carries N-linked (GlcNAc...) asparagine glycosylation. The pore-forming intramembrane region spans 328–348 (VTSLYFTLSTITSIGFGNVSA). Over 349 to 354 (TTDSEK) the chain is Extracellular. The helical transmembrane segment at 355–375 (IFTIIMMILGSLMYASVFGNV) threads the bilayer. Over 376–829 (SAIIQRLYSG…TPTQETDTIL (454 aa)) the chain is Cytoplasmic. 458-559 (AFAGSTPGCL…ILRDDLLDVL (102 aa)) serves as a coordination point for a nucleoside 3',5'-cyclic phosphate. A disordered region spans residues 601-674 (SMNKDRYTTP…PLLRRSTNHH (74 aa)). A compositionally biased stretch (basic and acidic residues) spans 603–615 (NKDRYTTPPDGDH). The segment covering 640–650 (SAGSRSSSRCS) has biased composition (low complexity).

Belongs to the potassium channel family. H (Eag) (TC 1.A.1.20) subfamily. Kv11.1/KCNH2 sub-subfamily. As to quaternary structure, the potassium channel is composed of a homo- or heterotetrameric complex. Interacts with dnj-1; dnj-1 chaperone promotes tetramerization.

Its subcellular location is the cell membrane. Functionally, pore-forming (alpha) subunit of voltage-gated inwardly rectifying potassium channel. Channel properties are modulated by cAMP and subunit assembly. Regulates the movements of the male's copulatory spicules before and during male mating behavior. The sequence is that of Potassium voltage-gated channel unc-103 from Caenorhabditis elegans.